The following is a 341-amino-acid chain: Anthranilate phosphoribosyltransferase (341 aa).

5-phospho-alpha-D-ribose 1-diphosphate is bound by residues glycine 79, 82–83 (GD), threonine 87, 89–92 (NIST), 107–115 (KHGNRAVSS), and serine 119. Residue glycine 79 participates in anthranilate binding. Residue serine 91 participates in Mg(2+) binding. Asparagine 110 contributes to the anthranilate binding site. An anthranilate-binding site is contributed by arginine 165. The Mg(2+) site is built by aspartate 224 and glutamate 225.

This sequence belongs to the anthranilate phosphoribosyltransferase family. In terms of assembly, homodimer. The cofactor is Mg(2+).

The enzyme catalyses N-(5-phospho-beta-D-ribosyl)anthranilate + diphosphate = 5-phospho-alpha-D-ribose 1-diphosphate + anthranilate. It participates in amino-acid biosynthesis; L-tryptophan biosynthesis; L-tryptophan from chorismate: step 2/5. Its function is as follows. Catalyzes the transfer of the phosphoribosyl group of 5-phosphorylribose-1-pyrophosphate (PRPP) to anthranilate to yield N-(5'-phosphoribosyl)-anthranilate (PRA). This Bacillus cereus (strain ZK / E33L) protein is Anthranilate phosphoribosyltransferase.